The sequence spans 280 residues: Putative pyruvate, phosphate dikinase regulatory protein (280 aa).

149-156 (GVSRSSKT) contributes to the ADP binding site.

The protein belongs to the pyruvate, phosphate/water dikinase regulatory protein family. PDRP subfamily.

It catalyses the reaction N(tele)-phospho-L-histidyl/L-threonyl-[pyruvate, phosphate dikinase] + ADP = N(tele)-phospho-L-histidyl/O-phospho-L-threonyl-[pyruvate, phosphate dikinase] + AMP + H(+). It carries out the reaction N(tele)-phospho-L-histidyl/O-phospho-L-threonyl-[pyruvate, phosphate dikinase] + phosphate + H(+) = N(tele)-phospho-L-histidyl/L-threonyl-[pyruvate, phosphate dikinase] + diphosphate. Functionally, bifunctional serine/threonine kinase and phosphorylase involved in the regulation of the pyruvate, phosphate dikinase (PPDK) by catalyzing its phosphorylation/dephosphorylation. The protein is Putative pyruvate, phosphate dikinase regulatory protein of Novosphingobium aromaticivorans (strain ATCC 700278 / DSM 12444 / CCUG 56034 / CIP 105152 / NBRC 16084 / F199).